A 234-amino-acid chain; its full sequence is Large ribosomal subunit protein uL3 (234 aa).

Residues 137 to 156 (AGHGVERKHRSPGSVGGCAT) form a disordered region.

This sequence belongs to the universal ribosomal protein uL3 family. In terms of assembly, part of the 50S ribosomal subunit. Forms a cluster with proteins L14 and L19.

Its function is as follows. One of the primary rRNA binding proteins, it binds directly near the 3'-end of the 23S rRNA, where it nucleates assembly of the 50S subunit. The protein is Large ribosomal subunit protein uL3 of Frankia alni (strain DSM 45986 / CECT 9034 / ACN14a).